Here is a 259-residue protein sequence, read N- to C-terminus: Deoxyribose-phosphate aldolase (259 aa).

The Proton donor/acceptor role is filled by D102. The active-site Schiff-base intermediate with acetaldehyde is K167. K201 serves as the catalytic Proton donor/acceptor.

It belongs to the DeoC/FbaB aldolase family. DeoC type 2 subfamily.

Its subcellular location is the cytoplasm. The catalysed reaction is 2-deoxy-D-ribose 5-phosphate = D-glyceraldehyde 3-phosphate + acetaldehyde. It functions in the pathway carbohydrate degradation; 2-deoxy-D-ribose 1-phosphate degradation; D-glyceraldehyde 3-phosphate and acetaldehyde from 2-deoxy-alpha-D-ribose 1-phosphate: step 2/2. In terms of biological role, catalyzes a reversible aldol reaction between acetaldehyde and D-glyceraldehyde 3-phosphate to generate 2-deoxy-D-ribose 5-phosphate. The sequence is that of Deoxyribose-phosphate aldolase from Escherichia coli (strain SMS-3-5 / SECEC).